Here is a 115-residue protein sequence, read N- to C-terminus: Na(+)/H(+) antiporter subunit C1 (115 aa).

Helical transmembrane passes span 1–21, 28–48, and 72–92; these read MEII…YLVL, IIMG…TMGG, and LILT…VLAF.

Belongs to the CPA3 antiporters (TC 2.A.63) subunit C family. As to quaternary structure, may form a heterooligomeric complex that consists of seven subunits: mnhA1, mnhB1, mnhC1, mnhD1, mnhE1, mnhF1 and mnhG1.

It localises to the cell membrane. In terms of biological role, mnh complex is a Na(+)/H(+) antiporter involved in Na(+) excretion. This Staphylococcus epidermidis (strain ATCC 35984 / DSM 28319 / BCRC 17069 / CCUG 31568 / BM 3577 / RP62A) protein is Na(+)/H(+) antiporter subunit C1 (mnhC1).